The sequence spans 308 residues: Protoheme IX farnesyltransferase (308 aa).

8 consecutive transmembrane segments (helical) span residues 31–51, 53–73, 102–122, 124–144, 149–169, 170–190, 242–262, and 288–308; these read VIEL…RGTV, PLLI…ANTL, HALI…WLST, LLSG…YTML, TSQN…IGWS, AVTG…FFWT, LATG…FLVM, and YLAV…PTLL.

The protein belongs to the UbiA prenyltransferase family. Protoheme IX farnesyltransferase subfamily.

The protein localises to the cell membrane. It catalyses the reaction heme b + (2E,6E)-farnesyl diphosphate + H2O = Fe(II)-heme o + diphosphate. It functions in the pathway porphyrin-containing compound metabolism; heme O biosynthesis; heme O from protoheme: step 1/1. In terms of biological role, converts heme B (protoheme IX) to heme O by substitution of the vinyl group on carbon 2 of heme B porphyrin ring with a hydroxyethyl farnesyl side group. The chain is Protoheme IX farnesyltransferase from Mycolicibacterium smegmatis (strain ATCC 700084 / mc(2)155) (Mycobacterium smegmatis).